A 427-amino-acid chain; its full sequence is Serine--tRNA ligase (427 aa).

231–233 is a binding site for L-serine; it reads TAE. Residue 262 to 264 coordinates ATP; it reads RSE. Glutamate 285 is a binding site for L-serine. ATP is bound at residue 349–352; it reads EISS. Serine 385 provides a ligand contact to L-serine.

This sequence belongs to the class-II aminoacyl-tRNA synthetase family. Type-1 seryl-tRNA synthetase subfamily. Homodimer. The tRNA molecule binds across the dimer.

The protein resides in the cytoplasm. The enzyme catalyses tRNA(Ser) + L-serine + ATP = L-seryl-tRNA(Ser) + AMP + diphosphate + H(+). It catalyses the reaction tRNA(Sec) + L-serine + ATP = L-seryl-tRNA(Sec) + AMP + diphosphate + H(+). It participates in aminoacyl-tRNA biosynthesis; selenocysteinyl-tRNA(Sec) biosynthesis; L-seryl-tRNA(Sec) from L-serine and tRNA(Sec): step 1/1. Functionally, catalyzes the attachment of serine to tRNA(Ser). Is also able to aminoacylate tRNA(Sec) with serine, to form the misacylated tRNA L-seryl-tRNA(Sec), which will be further converted into selenocysteinyl-tRNA(Sec). This chain is Serine--tRNA ligase, found in Rhizobium etli (strain CIAT 652).